A 602-amino-acid polypeptide reads, in one-letter code: Elongation factor 4 (602 aa).

Residues Arg7–Lys189 enclose the tr-type G domain. Residues Asp19 to Thr24 and Asn136 to Asp139 contribute to the GTP site.

Belongs to the TRAFAC class translation factor GTPase superfamily. Classic translation factor GTPase family. LepA subfamily.

Its subcellular location is the cell inner membrane. It carries out the reaction GTP + H2O = GDP + phosphate + H(+). Functionally, required for accurate and efficient protein synthesis under certain stress conditions. May act as a fidelity factor of the translation reaction, by catalyzing a one-codon backward translocation of tRNAs on improperly translocated ribosomes. Back-translocation proceeds from a post-translocation (POST) complex to a pre-translocation (PRE) complex, thus giving elongation factor G a second chance to translocate the tRNAs correctly. Binds to ribosomes in a GTP-dependent manner. The sequence is that of Elongation factor 4 from Stenotrophomonas maltophilia (strain R551-3).